Reading from the N-terminus, the 159-residue chain is 2-C-methyl-D-erythritol 2,4-cyclodiphosphate synthase (159 aa).

A divalent metal cation is bound by residues aspartate 10 and histidine 12. 4-CDP-2-C-methyl-D-erythritol 2-phosphate is bound by residues 10 to 12 (DVH) and 36 to 37 (HS). A divalent metal cation is bound at residue histidine 44. Residues 58-60 (DIG), 63-67 (FPDTD), 102-108 (AQAPKMA), 134-137 (TTTE), phenylalanine 141, and arginine 144 each bind 4-CDP-2-C-methyl-D-erythritol 2-phosphate.

Belongs to the IspF family. In terms of assembly, homotrimer. Requires a divalent metal cation as cofactor.

It catalyses the reaction 4-CDP-2-C-methyl-D-erythritol 2-phosphate = 2-C-methyl-D-erythritol 2,4-cyclic diphosphate + CMP. It participates in isoprenoid biosynthesis; isopentenyl diphosphate biosynthesis via DXP pathway; isopentenyl diphosphate from 1-deoxy-D-xylulose 5-phosphate: step 4/6. Involved in the biosynthesis of isopentenyl diphosphate (IPP) and dimethylallyl diphosphate (DMAPP), two major building blocks of isoprenoid compounds. Catalyzes the conversion of 4-diphosphocytidyl-2-C-methyl-D-erythritol 2-phosphate (CDP-ME2P) to 2-C-methyl-D-erythritol 2,4-cyclodiphosphate (ME-CPP) with a corresponding release of cytidine 5-monophosphate (CMP). In Shewanella sp. (strain ANA-3), this protein is 2-C-methyl-D-erythritol 2,4-cyclodiphosphate synthase.